Consider the following 291-residue polypeptide: ATP synthase gamma chain (291 aa).

It belongs to the ATPase gamma chain family. F-type ATPases have 2 components, CF(1) - the catalytic core - and CF(0) - the membrane proton channel. CF(1) has five subunits: alpha(3), beta(3), gamma(1), delta(1), epsilon(1). CF(0) has three main subunits: a, b and c.

The protein resides in the cell inner membrane. Functionally, produces ATP from ADP in the presence of a proton gradient across the membrane. The gamma chain is believed to be important in regulating ATPase activity and the flow of protons through the CF(0) complex. The polypeptide is ATP synthase gamma chain (Xanthobacter autotrophicus (strain ATCC BAA-1158 / Py2)).